Consider the following 164-residue polypeptide: Cyclic pyranopterin monophosphate synthase (164 aa).

Substrate is bound by residues 75-77 (MCH) and 116-117 (ME). Residue aspartate 131 is part of the active site.

The protein belongs to the MoaC family. Homohexamer; trimer of dimers.

It catalyses the reaction (8S)-3',8-cyclo-7,8-dihydroguanosine 5'-triphosphate = cyclic pyranopterin phosphate + diphosphate. It functions in the pathway cofactor biosynthesis; molybdopterin biosynthesis. Catalyzes the conversion of (8S)-3',8-cyclo-7,8-dihydroguanosine 5'-triphosphate to cyclic pyranopterin monophosphate (cPMP). The protein is Cyclic pyranopterin monophosphate synthase of Staphylococcus aureus (strain Mu3 / ATCC 700698).